The chain runs to 466 residues: Flagellum-specific ATP synthase (466 aa).

An ATP-binding site is contributed by 194–201 (SSSGLGKS).

This sequence belongs to the ATPase alpha/beta chains family.

Its subcellular location is the cytoplasm. It catalyses the reaction ATP + H2O + 4 H(+)(in) = ADP + phosphate + 5 H(+)(out). Probable catalytic subunit of a protein translocase for flagellum-specific export, or a proton translocase involved in local circuits at the flagellum. May be involved in a specialized protein export pathway that proceeds without signal peptide cleavage. The protein is Flagellum-specific ATP synthase (fliI) of Buchnera aphidicola subsp. Schizaphis graminum (strain Sg).